The chain runs to 257 residues: Imidazole glycerol phosphate synthase subunit HisF (257 aa).

Catalysis depends on residues D11 and D130.

It belongs to the HisA/HisF family. Heterodimer of HisH and HisF.

The protein resides in the cytoplasm. It catalyses the reaction 5-[(5-phospho-1-deoxy-D-ribulos-1-ylimino)methylamino]-1-(5-phospho-beta-D-ribosyl)imidazole-4-carboxamide + L-glutamine = D-erythro-1-(imidazol-4-yl)glycerol 3-phosphate + 5-amino-1-(5-phospho-beta-D-ribosyl)imidazole-4-carboxamide + L-glutamate + H(+). It functions in the pathway amino-acid biosynthesis; L-histidine biosynthesis; L-histidine from 5-phospho-alpha-D-ribose 1-diphosphate: step 5/9. Functionally, IGPS catalyzes the conversion of PRFAR and glutamine to IGP, AICAR and glutamate. The HisF subunit catalyzes the cyclization activity that produces IGP and AICAR from PRFAR using the ammonia provided by the HisH subunit. The sequence is that of Imidazole glycerol phosphate synthase subunit HisF from Shewanella piezotolerans (strain WP3 / JCM 13877).